We begin with the raw amino-acid sequence, 185 residues long: Elongation factor P (185 aa).

The protein belongs to the elongation factor P family.

It localises to the cytoplasm. It participates in protein biosynthesis; polypeptide chain elongation. Functionally, involved in peptide bond synthesis. Stimulates efficient translation and peptide-bond synthesis on native or reconstituted 70S ribosomes in vitro. Probably functions indirectly by altering the affinity of the ribosome for aminoacyl-tRNA, thus increasing their reactivity as acceptors for peptidyl transferase. The chain is Elongation factor P from Streptococcus equi subsp. equi (strain 4047).